A 507-amino-acid chain; its full sequence is Glucose transporter type 3 (507 aa).

The interval 1-26 (MRKGGIQDAEPVEPPQSSRKSGTWFA) is disordered. Over 1–53 (MRKGGIQDAEPVEPPQSSRKSGTWFAKRPSEMPERHVERAPVRQKINNVGLYK) the chain is Cytoplasmic. The helical transmembrane segment at 54–74 (ATLYSNIGSFFFGIAVGWSGT) threads the bilayer. The Extracellular portion of the chain corresponds to 75 to 95 (AERSVMEQHSYSFQPTELQWS). The helical transmembrane segment at 96-116 (GVCILLTLGAALWCLPMGLMV) threads the bilayer. Over 117–124 (RLLGCRRT) the chain is Cytoplasmic. Residues 125–145 (ILIQLLPNFLGWFLTVFARSV) traverse the membrane as a helical segment. Over 146–152 (PMLYAGR) the chain is Extracellular. Residues 153–173 (FFLGMCGGAHCVVVPIYNAEI) form a helical membrane-spanning segment. Over 174-183 (STTKKRGAMG) the chain is Cytoplasmic. The chain crosses the membrane as a helical span at residues 184-204 (VVFEGACICGVIYSFAMSLFL). Residues 205–207 (ELR) are Extracellular-facing. Residues 208 to 228 (IINFVNLGLLALGPLQILMPE) form a helical membrane-spanning segment. Over 229 to 293 (SPAYYVDHGN…YKKVRRSLAR (65 aa)) the chain is Cytoplasmic. A helical transmembrane segment spans residues 294 to 314 (SLAIALLQKLCGALIFIFYGL). Over 315-324 (NMLDCLRIRR) the chain is Extracellular. Residues 325-345 (EFGLILCLGLILGFLACFFLV) traverse the membrane as a helical segment. Residues 346 to 351 (DRLGRR) are Cytoplasmic-facing. The chain crosses the membrane as a helical span at residues 352-372 (PLLIFSSAGIVFVSIYLGLHF). Over 373–374 (KV) the chain is Extracellular. The chain crosses the membrane as a helical span at residues 375 to 395 (WMTMGLTVMSWIALFCIAIFV). At 396 to 420 (GCYTAGVGSLTWVLNAELLVRPMRP) the chain is on the cytoplasmic side. Residues 421 to 441 (LGCSIVCAFNWLTAFFVICWF) traverse the membrane as a helical segment. Residues 442-450 (GSHGVKCQP) are Extracellular-facing. The helical transmembrane segment at 451 to 471 (YLFLLFAIIASLILLFSLIYI) threads the bilayer. Residues 472–507 (PETKKLSSAKIQQRLGGLINRPAVITFTSSSDSSNA) are Cytoplasmic-facing.

The protein belongs to the major facilitator superfamily. Sugar transporter (TC 2.A.1.1) family. Glucose transporter subfamily.

The protein localises to the cell membrane. Its subcellular location is the perikaryon. It localises to the cell projection. In terms of biological role, facilitative glucose transporter that can also mediate the uptake of various other monosaccharides across the cell membrane. This is Glucose transporter type 3 (Glut3) from Drosophila melanogaster (Fruit fly).